Reading from the N-terminus, the 311-residue chain is Porphobilinogen deaminase (311 aa).

At Cys243 the chain carries S-(dipyrrolylmethanemethyl)cysteine.

Belongs to the HMBS family. In terms of assembly, monomer. The cofactor is dipyrromethane.

The enzyme catalyses 4 porphobilinogen + H2O = hydroxymethylbilane + 4 NH4(+). It functions in the pathway porphyrin-containing compound metabolism; protoporphyrin-IX biosynthesis; coproporphyrinogen-III from 5-aminolevulinate: step 2/4. Functionally, tetrapolymerization of the monopyrrole PBG into the hydroxymethylbilane pre-uroporphyrinogen in several discrete steps. The chain is Porphobilinogen deaminase from Aliivibrio salmonicida (strain LFI1238) (Vibrio salmonicida (strain LFI1238)).